The sequence spans 49 residues: Large ribosomal subunit protein bL33 (49 aa).

This sequence belongs to the bacterial ribosomal protein bL33 family.

In Streptococcus pyogenes serotype M18 (strain MGAS8232), this protein is Large ribosomal subunit protein bL33.